Consider the following 415-residue polypeptide: Plasminogen activator inhibitor 2, macrophage (415 aa).

Residues Asn-23, Asn-75, Asn-261, and Asn-339 are each glycosylated (N-linked (GlcNAc...) asparagine).

The protein belongs to the serpin family. Ov-serpin subfamily. Interacts with PSMB1. In terms of processing, the signal sequence is not cleaved.

It is found in the cytoplasm. Its subcellular location is the secreted. The protein resides in the extracellular space. Its function is as follows. Inhibits urokinase-type plasminogen activator. The monocyte derived PAI-2 is distinct from the endothelial cell-derived PAI-1. Not required for normal murine development or survival. The protein is Plasminogen activator inhibitor 2, macrophage (Serpinb2) of Mus musculus (Mouse).